A 249-amino-acid polypeptide reads, in one-letter code: ATP-dependent dethiobiotin synthetase BioD (249 aa).

Position 11–16 (11–16 (NVGKTI)) interacts with ATP. Mg(2+) is bound at residue Thr15. Lys31 is a catalytic residue. Thr35 serves as a coordination point for substrate. ATP-binding positions include Asp40, 127–130 (EGAG), 188–189 (NS), and 215–217 (PYL). 2 residues coordinate Mg(2+): Asp40 and Glu127.

This sequence belongs to the dethiobiotin synthetase family. As to quaternary structure, homodimer. Mg(2+) serves as cofactor.

The protein localises to the cytoplasm. It catalyses the reaction (7R,8S)-7,8-diammoniononanoate + CO2 + ATP = (4R,5S)-dethiobiotin + ADP + phosphate + 3 H(+). It functions in the pathway cofactor biosynthesis; biotin biosynthesis; biotin from 7,8-diaminononanoate: step 1/2. Its function is as follows. Catalyzes a mechanistically unusual reaction, the ATP-dependent insertion of CO2 between the N7 and N8 nitrogen atoms of 7,8-diaminopelargonic acid (DAPA, also called 7,8-diammoniononanoate) to form a ureido ring. The sequence is that of ATP-dependent dethiobiotin synthetase BioD from Neorickettsia sennetsu (strain ATCC VR-367 / Miyayama) (Ehrlichia sennetsu).